The primary structure comprises 358 residues: Protein-glutamate methylesterase/protein-glutamine glutaminase 2 (358 aa).

The region spanning 8-125 (RVLIVDDSAV…ARGLEGYAEE (118 aa)) is the Response regulatory domain. 4-aspartylphosphate is present on Asp-59. Residues 157–352 (PMPGSALRFR…LDRVAERLLA (196 aa)) form the CheB-type methylesterase domain. Active-site residues include Ser-177, His-203, and Asp-299.

It belongs to the CheB family. Post-translationally, phosphorylated by CheA. Phosphorylation of the N-terminal regulatory domain activates the methylesterase activity.

The protein resides in the cytoplasm. It catalyses the reaction [protein]-L-glutamate 5-O-methyl ester + H2O = L-glutamyl-[protein] + methanol + H(+). The enzyme catalyses L-glutaminyl-[protein] + H2O = L-glutamyl-[protein] + NH4(+). Functionally, involved in chemotaxis. Part of a chemotaxis signal transduction system that modulates chemotaxis in response to various stimuli. Catalyzes the demethylation of specific methylglutamate residues introduced into the chemoreceptors (methyl-accepting chemotaxis proteins or MCP) by CheR. Also mediates the irreversible deamidation of specific glutamine residues to glutamic acid. This Xanthomonas oryzae pv. oryzae (strain MAFF 311018) protein is Protein-glutamate methylesterase/protein-glutamine glutaminase 2.